The sequence spans 357 residues: S-adenosylmethionine:tRNA ribosyltransferase-isomerase (357 aa).

The protein belongs to the QueA family. In terms of assembly, monomer.

It localises to the cytoplasm. The enzyme catalyses 7-aminomethyl-7-carbaguanosine(34) in tRNA + S-adenosyl-L-methionine = epoxyqueuosine(34) in tRNA + adenine + L-methionine + 2 H(+). It participates in tRNA modification; tRNA-queuosine biosynthesis. Its function is as follows. Transfers and isomerizes the ribose moiety from AdoMet to the 7-aminomethyl group of 7-deazaguanine (preQ1-tRNA) to give epoxyqueuosine (oQ-tRNA). The chain is S-adenosylmethionine:tRNA ribosyltransferase-isomerase from Hamiltonella defensa subsp. Acyrthosiphon pisum (strain 5AT).